Consider the following 261-residue polypeptide: tRNA pseudouridine synthase A (261 aa).

The active-site Nucleophile is the Asp-51. Tyr-109 provides a ligand contact to substrate.

It belongs to the tRNA pseudouridine synthase TruA family. As to quaternary structure, homodimer.

The catalysed reaction is uridine(38/39/40) in tRNA = pseudouridine(38/39/40) in tRNA. Its function is as follows. Formation of pseudouridine at positions 38, 39 and 40 in the anticodon stem and loop of transfer RNAs. The protein is tRNA pseudouridine synthase A of Shewanella sediminis (strain HAW-EB3).